Here is a 159-residue protein sequence, read N- to C-terminus: Nudix hydrolase DR_1025 (159 aa).

Mg(2+) is bound by residues methionine 1, arginine 14, and serine 49. An ATP-binding site is contributed by 1-6; that stretch reads MEHDER. The Nudix hydrolase domain maps to 11–144; sequence VELRAAGVVL…QIRMYQTKLF (134 aa). 50–51 is a binding site for ATP; sequence GA. A Nudix box motif is present at residues 50–71; sequence GAVEDGENPQDAAVREACEETG. 2 residues coordinate Mg(2+): glutamate 53 and glutamate 65. 87 to 89 contacts ATP; it reads FPD. Arginine 95 contributes to the Mg(2+) binding site.

This sequence belongs to the Nudix hydrolase family. Homodimer. The cofactor is Mg(2+).

It catalyses the reaction 8-oxo-dGTP + H2O = 8-oxo-dGDP + phosphate + H(+). The catalysed reaction is 8-oxo-GTP + H2O = 8-oxo-GDP + phosphate + H(+). The enzyme catalyses P(1),P(4)-bis(5'-adenosyl) tetraphosphate + H2O = AMP + ATP + 2 H(+). Its function is as follows. Hydrolase that can act as a nucleoside triphosphatase and a dinucleoside polyphosphate pyrophosphatase. The best substrates are 8-oxo-dGTP and 8-oxo-GTP. Other substrates include Ap4A, dGTP and GTP. May be involved in protection from damage caused by radiation. This is Nudix hydrolase DR_1025 from Deinococcus radiodurans (strain ATCC 13939 / DSM 20539 / JCM 16871 / CCUG 27074 / LMG 4051 / NBRC 15346 / NCIMB 9279 / VKM B-1422 / R1).